Reading from the N-terminus, the 325-residue chain is Hydroxymethylglutaryl-CoA lyase, mitochondrial (325 aa).

The transit peptide at 1–27 (MATVKKVLPRRLVGLATLRAVSTSSVG) directs the protein to the mitochondrion. In terms of domain architecture, Pyruvate carboxyltransferase spans 33–300 (VKIVEVGPRD…HTGVNLQKLL (268 aa)). Arg-41 serves as a coordination point for substrate. An a divalent metal cation-binding site is contributed by Asp-42. Lys-48 is subject to N6-acetyllysine; alternate. Lys-48 is modified (N6-succinyllysine; alternate). Residue Lys-111 is modified to N6-acetyllysine. An N6-acetyllysine; alternate mark is found at Lys-137 and Lys-179. 2 positions are modified to N6-succinyllysine; alternate: Lys-137 and Lys-179. His-233 and His-235 together coordinate a divalent metal cation. Cys-266 is a catalytic residue. An a divalent metal cation-binding site is contributed by Asn-275. Residues 323-325 (CKL) carry the Microbody targeting signal motif. Lys-324 is modified (N6-acetyllysine).

This sequence belongs to the HMG-CoA lyase family. In terms of assembly, homodimer; disulfide-linked. Can also form homotetramers.

The protein localises to the mitochondrion matrix. Its subcellular location is the peroxisome. The enzyme catalyses (3S)-3-hydroxy-3-methylglutaryl-CoA = acetoacetate + acetyl-CoA. It participates in metabolic intermediate metabolism; (S)-3-hydroxy-3-methylglutaryl-CoA degradation; acetoacetate from (S)-3-hydroxy-3-methylglutaryl-CoA: step 1/1. Mitochondrial 3-hydroxy-3-methylglutaryl-CoA lyase that catalyzes a cation-dependent cleavage of (S)-3-hydroxy-3-methylglutaryl-CoA into acetyl-CoA and acetoacetate, a key step in ketogenesis. Terminal step in leucine catabolism. Ketone bodies (beta-hydroxybutyrate, acetoacetate and acetone) are essential as an alternative source of energy to glucose, as lipid precursors and as regulators of metabolism. The sequence is that of Hydroxymethylglutaryl-CoA lyase, mitochondrial (HMGCL) from Bos taurus (Bovine).